We begin with the raw amino-acid sequence, 790 residues long: Cadherin-6 (790 aa).

The N-terminal stretch at 1 to 18 (MRTYRYFLLLFWVGQPYP) is a signal peptide. Positions 19–53 (TFSNPLSKRTSGFPAKRKALELSANSRNELSRSKR) are excised as a propeptide. Cadherin domains lie at 54 to 159 (SWMW…EPIF), 160 to 268 (TKDV…PPRF), 269 to 383 (PQST…PPVF), 384 to 486 (SKLA…DNAP), and 487 to 608 (EFAE…LIHP). Topologically, residues 54 to 615 (SWMWNQFFLL…IHPTGLSTGA (562 aa)) are extracellular. The N-linked (GlcNAc...) asparagine glycan is linked to Asn255. The segment at 260–291 (DVNDNPPRFPQSTYQFKTPESSPPGTPIGRIK) is disordered. Residues 269–279 (PQSTYQFKTPE) are compositionally biased toward polar residues. N-linked (GlcNAc...) asparagine glycans are attached at residues Asn399, Asn437, Asn455, and Asn536. Residues 616–636 (LVAILLCIVILLVTVVLFAAL) form a helical membrane-spanning segment. The Cytoplasmic portion of the chain corresponds to 637–790 (RRQRKKEPLI…YGGMDSDKDS (154 aa)). Ser786 and Ser790 each carry phosphoserine.

Its subcellular location is the cell membrane. Cadherins are calcium-dependent cell adhesion proteins. They preferentially interact with themselves in a homophilic manner in connecting cells; cadherins may thus contribute to the sorting of heterogeneous cell types. This chain is Cadherin-6 (Cdh6), found in Mus musculus (Mouse).